The following is a 207-amino-acid chain: Probable isochorismatase (207 aa).

Belongs to the isochorismatase family.

It carries out the reaction isochorismate + H2O = (2S,3S)-2,3-dihydroxy-2,3-dihydrobenzoate + pyruvate. The protein operates within antibiotic biosynthesis; phenazine biosynthesis. Its function is as follows. Involved in the biosynthesis of the antibiotic phenazine, a nitrogen-containing heterocyclic molecule having important roles in virulence, competition and biological control. This isochorismatase may remove pyruvate from chorismate during the formation of the phenazine ring structure and/or stabilize the phenazine biosynthetic complex. The sequence is that of Probable isochorismatase (phzA) from Pseudomonas chlororaphis (Pseudomonas aureofaciens).